The sequence spans 266 residues: UPF0294 protein YafD (266 aa).

It belongs to the UPF0294 family.

The protein localises to the cytoplasm. The protein is UPF0294 protein YafD of Salmonella paratyphi C (strain RKS4594).